The primary structure comprises 240 residues: Keratinocyte-associated protein 3 (240 aa).

A run of 4 helical transmembrane segments spans residues 21-41, 63-83, 95-115, and 163-183; these read VGLALILVGHVNLLLGAVLHG, VISVGSGLLSVSLGLVALLAS, LLALALVNLLLSAACSLGLLL, and ALALWIPSVFMSAAEAALSGY.

It belongs to the TMEM54 family.

It localises to the membrane. The sequence is that of Keratinocyte-associated protein 3 (KRTCAP3) from Bos taurus (Bovine).